The sequence spans 637 residues: ATP-dependent zinc metalloprotease FtsH (637 aa).

The Cytoplasmic portion of the chain corresponds to 1–6; that stretch reads MNNQGR. A helical transmembrane segment spans residues 7 to 27; the sequence is SILAWAALFIFVILLFNVFQS. At 28 to 103 the chain is on the periplasmic side; the sequence is DGLLGVRNNI…VVPLETRMNT (76 aa). The chain crosses the membrane as a helical span at residues 104-124; that stretch reads FLGFLISWFPMLLLIGVWVFF. Residues 125 to 637 are Cytoplasmic-facing; that stretch reads MRQMHGGGKA…TKAQKENIAS (513 aa). 195–202 is a binding site for ATP; it reads GPPGTGKT. A Zn(2+)-binding site is contributed by histidine 417. Glutamate 418 is an active-site residue. Residues histidine 421 and aspartate 495 each contribute to the Zn(2+) site. Residues 617–637 are disordered; the sequence is DKEKLHEKTKTTKAQKENIAS.

In the central section; belongs to the AAA ATPase family. It in the C-terminal section; belongs to the peptidase M41 family. In terms of assembly, homohexamer. Zn(2+) is required as a cofactor.

Its subcellular location is the cell inner membrane. Acts as a processive, ATP-dependent zinc metallopeptidase for both cytoplasmic and membrane proteins. Plays a role in the quality control of integral membrane proteins. The chain is ATP-dependent zinc metalloprotease FtsH from Rickettsia typhi (strain ATCC VR-144 / Wilmington).